Here is a 135-residue protein sequence, read N- to C-terminus: Ribonuclease P protein component (135 aa).

The disordered stretch occupies residues 115 to 135 (ETEPVSPVSPTSLPQNERGSP). A compositionally biased stretch (polar residues) spans 122 to 135 (VSPTSLPQNERGSP).

Belongs to the RnpA family. As to quaternary structure, consists of a catalytic RNA component (M1 or rnpB) and a protein subunit.

It catalyses the reaction Endonucleolytic cleavage of RNA, removing 5'-extranucleotides from tRNA precursor.. Functionally, RNaseP catalyzes the removal of the 5'-leader sequence from pre-tRNA to produce the mature 5'-terminus. It can also cleave other RNA substrates such as 4.5S RNA. The protein component plays an auxiliary but essential role in vivo by binding to the 5'-leader sequence and broadening the substrate specificity of the ribozyme. The chain is Ribonuclease P protein component from Chloroflexus aggregans (strain MD-66 / DSM 9485).